Reading from the N-terminus, the 72-residue chain is MSLTQLQERIEDLECKLAFQEQTIETLNDALTQQQLLLSKMQDQMKYVVGKVKNMDTSTLADPAHETPPPHY.

The protein belongs to the SlyX family.

The polypeptide is Protein SlyX homolog (Vibrio cholerae serotype O1 (strain ATCC 39541 / Classical Ogawa 395 / O395)).